Reading from the N-terminus, the 450-residue chain is Phosphoglucosamine mutase (450 aa).

The active-site Phosphoserine intermediate is the serine 103. 4 residues coordinate Mg(2+): serine 103, aspartate 243, aspartate 245, and aspartate 247. At serine 103 the chain carries Phosphoserine.

The protein belongs to the phosphohexose mutase family. It depends on Mg(2+) as a cofactor. Post-translationally, activated by phosphorylation.

The catalysed reaction is alpha-D-glucosamine 1-phosphate = D-glucosamine 6-phosphate. Functionally, catalyzes the conversion of glucosamine-6-phosphate to glucosamine-1-phosphate. This chain is Phosphoglucosamine mutase, found in Lactobacillus helveticus (strain DPC 4571).